The following is a 367-amino-acid chain: Glutamate 5-kinase (367 aa).

An ATP-binding site is contributed by K9. The substrate site is built by S49, D136, and N148. ATP contacts are provided by residues 168–169 (TD) and 210–216 (TGGMKSK). The PUA domain occupies 276–350 (SGQIEIDAGA…GMQSQHIQAR (75 aa)).

It belongs to the glutamate 5-kinase family.

It localises to the cytoplasm. It carries out the reaction L-glutamate + ATP = L-glutamyl 5-phosphate + ADP. The protein operates within amino-acid biosynthesis; L-proline biosynthesis; L-glutamate 5-semialdehyde from L-glutamate: step 1/2. Catalyzes the transfer of a phosphate group to glutamate to form L-glutamate 5-phosphate. The sequence is that of Glutamate 5-kinase from Bacillus cereus (strain ZK / E33L).